Reading from the N-terminus, the 207-residue chain is Ribonuclease HII (207 aa).

The 190-residue stretch at 12 to 201 (DLVAGVDEVG…VRAAWEVREG (190 aa)) folds into the RNase H type-2 domain. The a divalent metal cation site is built by Asp-18, Glu-19, and Asp-110.

This sequence belongs to the RNase HII family. Mn(2+) serves as cofactor. It depends on Mg(2+) as a cofactor.

Its subcellular location is the cytoplasm. It catalyses the reaction Endonucleolytic cleavage to 5'-phosphomonoester.. Endonuclease that specifically degrades the RNA of RNA-DNA hybrids. This is Ribonuclease HII from Pseudomonas putida (strain ATCC 700007 / DSM 6899 / JCM 31910 / BCRC 17059 / LMG 24140 / F1).